The following is a 776-amino-acid chain: Ion-translocating oxidoreductase complex subunit C (776 aa).

4Fe-4S ferredoxin-type domains follow at residues 368–397 and 407–436; these read MGAPQEEQHCIRCSACADACPADLLPQQLY and KATAHNLADCIECGACAYVCPSNIPLVQYF. [4Fe-4S] cluster is bound by residues Cys-377, Cys-380, Cys-383, Cys-387, Cys-416, Cys-419, Cys-422, and Cys-426. Composition is skewed to basic and acidic residues over residues 534-543, 597-611, 633-647, 669-683, and 705-719; these read ARARQAEKVQ, ADEKPAEPIDPRKAA, and ADEKPAEPIDPRKAT. Residues 534-754 form a disordered region; it reads ARARQAEKVQ…ENEAEDPRKA (221 aa). Residues 721–743 show a composition bias toward low complexity; that stretch reads EAAIARAKARKAAQAGERAQAAN.

Belongs to the 4Fe4S bacterial-type ferredoxin family. RnfC subfamily. The complex is composed of six subunits: RnfA, RnfB, RnfC, RnfD, RnfE and RnfG. The cofactor is [4Fe-4S] cluster.

It is found in the cell inner membrane. Its function is as follows. Part of a membrane-bound complex that couples electron transfer with translocation of ions across the membrane. The sequence is that of Ion-translocating oxidoreductase complex subunit C from Cronobacter sakazakii (strain ATCC BAA-894) (Enterobacter sakazakii).